The chain runs to 232 residues: Adenosylcobinamide-GDP ribazoletransferase (232 aa).

The next 6 helical transmembrane spans lie at 31–51 (LPSF…LGAL), 59–79 (VFFL…GFLD), 102–122 (VGPF…NLYL), 126–146 (PFYF…LMAF), 167–187 (LLIS…YIIS), and 209–229 (VTGD…LLIL).

Belongs to the CobS family. The cofactor is Mg(2+).

It localises to the cell inner membrane. It carries out the reaction alpha-ribazole + adenosylcob(III)inamide-GDP = adenosylcob(III)alamin + GMP + H(+). The enzyme catalyses alpha-ribazole 5'-phosphate + adenosylcob(III)inamide-GDP = adenosylcob(III)alamin 5'-phosphate + GMP + H(+). The protein operates within cofactor biosynthesis; adenosylcobalamin biosynthesis; adenosylcobalamin from cob(II)yrinate a,c-diamide: step 7/7. In terms of biological role, joins adenosylcobinamide-GDP and alpha-ribazole to generate adenosylcobalamin (Ado-cobalamin). Also synthesizes adenosylcobalamin 5'-phosphate from adenosylcobinamide-GDP and alpha-ribazole 5'-phosphate. This chain is Adenosylcobinamide-GDP ribazoletransferase, found in Thermosipho africanus (strain TCF52B).